The sequence spans 982 residues: Cell division cycle-associated protein 2 (982 aa).

Residues 75–87 (VKTSSGKSTSSLQ) show a composition bias toward polar residues. A disordered region spans residues 75 to 97 (VKTSSGKSTSSLQKARRRSTVGV). 3 positions are modified to phosphoserine: Ser100, Ser122, and Ser133. 2 disordered regions span residues 192-216 (SGFPVNSSSKRRRISSQDSPDNYLS) and 274-315 (TPLS…CGSS). 2 stretches are compositionally biased toward polar residues: residues 207 to 216 (SQDSPDNYLS) and 275 to 315 (PLSS…CGSS). A phosphoserine mark is found at Ser286, Ser296, and Ser306. Thr309 carries the post-translational modification Phosphothreonine. The PP1-binding domain occupies 379–436 (KRKRVTFGEDLSPEVFDESLPANTPLCKGGTPVRPRTVKTTSPLQSPVHEQFLQPNFD). Phosphoserine is present on residues Ser390 and Ser397. 4 disordered regions span residues 400–473 (ANTP…NTCS), 489–545 (TRTS…KSYR), 568–638 (KPLL…QSQV), and 651–716 (ASER…PQSQ). Thr402 carries the post-translational modification Phosphothreonine. The residue at position 424 (Ser424) is a Phosphoserine. 2 stretches are compositionally biased toward polar residues: residues 451 to 473 (SFANLSLSKSSLSETPPGTNTCS) and 498 to 512 (TLSSTGVCSSYTTQA). Residues 518–545 (KMSRRKSREKKHTSAALPKKKQVLKSYR) are compositionally biased toward basic residues. Ser572 and Ser595 each carry phosphoserine. Positions 651–668 (ASERGPNASTRDTGSEGN) are enriched in polar residues. The span at 669-685 (TRAESKCQSAKEPKPGT) shows a compositional bias: basic and acidic residues. Ser735 is modified (phosphoserine). Lys741 participates in a covalent cross-link: Glycyl lysine isopeptide (Lys-Gly) (interchain with G-Cter in SUMO2). The segment at 910–982 (ECPSSKEETI…SLKGESAQLP (73 aa)) is disordered. Ser913 carries the phosphoserine modification. Over residues 931-942 (VSGSESQGVGSS) the composition is skewed to low complexity. Residue Ser950 is modified to Phosphoserine. Residues 952–964 (CGSTLTDANSATQ) are compositionally biased toward polar residues. Position 973 is a phosphoserine (Ser973).

In terms of assembly, interacts with PPP1CC. Phosphorylated by CDK1. May regulate its subcellular location.

It is found in the nucleus. In terms of biological role, regulator of chromosome structure during mitosis required for condensin-depleted chromosomes to retain their compact architecture through anaphase. Acts by mediating the recruitment of phopsphatase PP1-gamma subunit (PPP1CC) to chromatin at anaphase and into the following interphase. At anaphase onset, its association with chromatin targets a pool of PPP1CC to dephosphorylate substrates. The protein is Cell division cycle-associated protein 2 (Cdca2) of Mus musculus (Mouse).